Consider the following 518-residue polypeptide: MIISSYHLLAPRCRRDQKVYNKSIHVLNTVAKGIKGWPFLGSAPALAAVDTNGIIGIFKSWAEQYGSITQFSAMGDKQVILTEDKDARELFVRRGIKYSDRGAPHAVEYISMKQNPGFRPKDDGWRRQRSMIQSAINITSINKYQSLMDDEATFTVNALLQSPDSFHGEFLRYSYSVLTSSLLGFSVRSPSDPFIHHNETFTAELMNSFRPDCFPSNVFPVLRKLPMWLLPSLRTMERLRKEYVGEMWAFRRKIEKLVKEGSATECIYKHFLLHRDQYNVTEEESVHTFQAMIDGGTRSPHNNLLTFLFLMMEFPEWQKKLQEEVDRVVGRDRMPSYRDIPNLPTVRAIVKETVRYRSIVAEMGIGHCLQTDDIYKGYFFEKGTVFNAIFASILMDKDTYPDGKLFNPARWLEPSYPTYKEPLTTYPNCQGFPAFGYGRRACPGVDFAERTLVIMFAKLGWTMNIRWPRDEDGNELREELQYEPVPAPRPLKFGCRLEARDADRAKIVEEAAKHLKLQ.

Cysteine 442 serves as a coordination point for heme.

The protein belongs to the cytochrome P450 family. Heme serves as cofactor.

The protein operates within secondary metabolite biosynthesis. In terms of biological role, cytochrome P450 monooxygenase; part of the gene cluster that mediates the biosynthesis of pseurotin A, a competitive inhibitor of chitin synthase and an inducer of nerve-cell proliferation. The PKS-NRPS hybrid synthetase psoA is responsible for the biosynthesis of azaspirene, one of the first intermediates having the 1-oxa-7-azaspiro[4,4]-non-2-ene-4,6-dione core of pseurotin, via condensation of one acetyl-CoA, 4 malonyl-CoA, and a L-phenylalanine molecule. The dual-functional monooxygenase/methyltransferase psoF seems to be involved in the addition of the C3 methyl group onto the pseurotin scaffold. Azaspirene is then converted to synerazol through 4 steps including oxidation of C17 by the cytochrome P450 monooxygenase psoD, O-methylation of the hydroxy group of C8 by the methyltransferase psoC, and the trans-to-cis isomerization of the C13 olefin by the glutathione S-transferase psoE. The fourth step of synerazol production is performed by the dual-functional monooxygenase/methyltransferase psoF which seems to catalyze the epoxidation of the intermediate deepoxy-synerazol. Synerazol can be attacked by a water molecule nonenzymatically at two different positions to yield two diol products, pseurotin A and pseurotin D. The sequence is that of Cytochrome P450 monooxygenase psoD from Aspergillus fumigatus (strain ATCC MYA-4609 / CBS 101355 / FGSC A1100 / Af293) (Neosartorya fumigata).